Reading from the N-terminus, the 197-residue chain is Probable GTP-binding protein EngB (197 aa).

Positions 25–197 (SAPEIAFAGR…VRDEFFKFTR (173 aa)) constitute an EngB-type G domain. Residues 33–40 (GRSNVGKS), 60–64 (GCTRQ), 79–82 (DLPG), 146–149 (TKID), and 177–179 (MSI) each bind GTP. 2 residues coordinate Mg(2+): Ser40 and Thr62.

The protein belongs to the TRAFAC class TrmE-Era-EngA-EngB-Septin-like GTPase superfamily. EngB GTPase family. Mg(2+) is required as a cofactor.

Functionally, necessary for normal cell division and for the maintenance of normal septation. The polypeptide is Probable GTP-binding protein EngB (Wolbachia pipientis wMel).